Reading from the N-terminus, the 146-residue chain is Hemoglobin subunit beta (146 aa).

Residue valine 1 is modified to N-acetylvaline. The 145-residue stretch at histidine 2 to histidine 146 folds into the Globin domain. Threonine 12 is modified (phosphothreonine). The residue at position 44 (serine 44) is a Phosphoserine. Histidine 63 contributes to the heme b binding site. The residue at position 82 (lysine 82) is an N6-acetyllysine. Histidine 92 contributes to the heme b binding site. At cysteine 93 the chain carries S-nitrosocysteine. N6-acetyllysine is present on lysine 144.

It belongs to the globin family. As to quaternary structure, heterotetramer of two alpha chains and two beta chains. Red blood cells.

Involved in oxygen transport from the lung to the various peripheral tissues. This chain is Hemoglobin subunit beta (HBB), found in Tursiops truncatus (Atlantic bottle-nosed dolphin).